The chain runs to 602 residues: Aryl hydrocarbon receptor protein 1 (602 aa).

A propeptide spanning residues 1–2 (MY) is cleaved from the precursor. Positions 1 to 12 (MYASKRRQRNFK) are enriched in basic residues. The interval 1 to 28 (MYASKRRQRNFKRVRDPPKQLTNTNPSK) is disordered. 2 short sequence motifs (nuclear localization signal) span residues 5–8 (KRRQ) and 28–33 (KRHRER). Residues 18-71 (PKQLTNTNPSKRHRERLNGELETVAMLLPYDSSTISRLDKLSVLRLAVSFLQCK) form the bHLH domain. 3 required for maintaining the overall integrity of the AHR:ARNT heterodimer and its transcriptional activity regions span residues 41–73 (VAML…CKAH), 133–141 (SLKSLGGFI), and 266–268 (ICV). The Nuclear export signal motif lies at 55–63 (LDKLSVLRL). The PAS domain maps to 126–196 (ESNFEEISLK…QQLDSNFHIP (71 aa)). Residues 440–467 (STSNSLFPSVPVPTPTTTKANRRRKENS) form a disordered region.

Interacts with daf-21/hsp90. Interacts with aha-1. Expressed in many distinct neuronal cells including RMED, RMEV, RMEL and RMER. Functions in URX neurons to promote aggregation behavior.

Its subcellular location is the nucleus. Probable ligand-activated transcriptional activator. Acts as a transcriptional regulator in GABAergic motor neuron cell fate specification and development. Promotes cell-type-specific expression of guanylate cyclase genes that have key roles in aggregation behavior and hyperoxia avoidance. Has no role in carbon dioxide avoidance. This chain is Aryl hydrocarbon receptor protein 1, found in Caenorhabditis elegans.